We begin with the raw amino-acid sequence, 193 residues long: MSAVATYLKTLTARRTIYALKPELPGEITINDIQSVVQTIIKETPTAFNSQPNRAVILTGETHKKVWDEVTKAIESPAGQKRPASARDEAFGSVIFFTDDKVTEKLKADFPAYAAAFPSFADHTSGAAQINSWVALEAMGLGGHLQHYNGYIKAALPSKIPESWTVQAQLVFGTPAAPPGEKTYIKNDVEIFN.

Serine 2 is subject to N-acetylserine.

The protein belongs to the nitroreductase family. Requires FMN as cofactor.

Its subcellular location is the cytoplasm. The protein localises to the nucleus. This chain is Putative nitroreductase HBN1 (HBN1), found in Saccharomyces cerevisiae (strain ATCC 204508 / S288c) (Baker's yeast).